Here is a 432-residue protein sequence, read N- to C-terminus: Mannose-6-phosphate isomerase 1 (432 aa).

Met1 carries the N-acetylmethionine modification. 4 residues coordinate Zn(2+): Gln124, His126, Glu151, and His288. Arg307 is a catalytic residue.

Belongs to the mannose-6-phosphate isomerase type 1 family. It depends on Zn(2+) as a cofactor. In terms of tissue distribution, constitutively expressed in both vegetative and reproductive organs under normal growth conditions (at protein level).

It catalyses the reaction D-mannose 6-phosphate = D-fructose 6-phosphate. The protein operates within nucleotide-sugar biosynthesis; GDP-alpha-D-mannose biosynthesis; alpha-D-mannose 1-phosphate from D-fructose 6-phosphate: step 1/2. With respect to regulation, inhibited by EDTA, Zn(2+), Cd(2+), Co(2+), p-chloromercuribenzoate and L-ascorbic acid (AsA). Phosphomannose isomerase involved in the synthesis of the GDP-mannose and dolichol-phosphate-mannose required for a number of critical mannosyl transfer reactions. Involved in the ascorbic acid (AsA) biosynthesis. Required during the endosperm development. The protein is Mannose-6-phosphate isomerase 1 (PMI1) of Arabidopsis thaliana (Mouse-ear cress).